The primary structure comprises 138 residues: Small ribosomal subunit protein uS11c (138 aa).

Positions 1–22 (MAKPILRVGSRKNTRSASRKNV) are disordered. Residues 9 to 22 (GSRKNTRSASRKNV) show a composition bias toward basic residues.

This sequence belongs to the universal ribosomal protein uS11 family. As to quaternary structure, part of the 30S ribosomal subunit.

The protein resides in the plastid. It localises to the chloroplast. The sequence is that of Small ribosomal subunit protein uS11c from Draba nemorosa (Woodland whitlowgrass).